The primary structure comprises 589 residues: C-type lectin domain family 4 member F (589 aa).

Over 1 to 39 (MDGEAVRFCTDNQCVSLHPQEVDSVAMAPAAPKIPRLVQ) the chain is Cytoplasmic. Residues 40 to 60 (ATPAFMAVTLVFSLVTLFVVV) form a helical; Signal-anchor for type II membrane protein membrane-spanning segment. At 61 to 589 (QQQTRPVPKP…TPPCPWILSN (529 aa)) the chain is on the extracellular side. N-linked (GlcNAc...) asparagine glycans are attached at residues N79, N113, N207, N230, N244, N312, N385, and N399. The C-type lectin domain occupies 476–589 (NGGSLYYFSS…TPPCPWILSN (114 aa)).

It localises to the membrane. Functionally, receptor with an affinity for galactose and fucose. Could be involved in endocytosis. The sequence is that of C-type lectin domain family 4 member F (CLEC4F) from Homo sapiens (Human).